The chain runs to 256 residues: Thiazole synthase (256 aa).

The Schiff-base intermediate with DXP role is filled by Lys-102. 1-deoxy-D-xylulose 5-phosphate contacts are provided by residues Gly-163, 189–190 (AG), and 211–212 (AT).

This sequence belongs to the ThiG family. Homotetramer. Forms heterodimers with either ThiH or ThiS.

Its subcellular location is the cytoplasm. The enzyme catalyses [ThiS sulfur-carrier protein]-C-terminal-Gly-aminoethanethioate + 2-iminoacetate + 1-deoxy-D-xylulose 5-phosphate = [ThiS sulfur-carrier protein]-C-terminal Gly-Gly + 2-[(2R,5Z)-2-carboxy-4-methylthiazol-5(2H)-ylidene]ethyl phosphate + 2 H2O + H(+). The protein operates within cofactor biosynthesis; thiamine diphosphate biosynthesis. Its function is as follows. Catalyzes the rearrangement of 1-deoxy-D-xylulose 5-phosphate (DXP) to produce the thiazole phosphate moiety of thiamine. Sulfur is provided by the thiocarboxylate moiety of the carrier protein ThiS. In vitro, sulfur can be provided by H(2)S. This Nocardia farcinica (strain IFM 10152) protein is Thiazole synthase.